A 1202-amino-acid polypeptide reads, in one-letter code: Calmodulin-binding transcription activator 2 (1202 aa).

Positions arginine 30–cysteine 155 form a DNA-binding region, CG-1. The Nuclear localization signal motif lies at arginine 79–lysine 86. Disordered regions lie at residues serine 263–glycine 322, glycine 361–proline 409, and proline 421–glycine 491. The segment covering proline 270–leucine 283 has biased composition (pro residues). 2 stretches are compositionally biased toward low complexity: residues serine 289–serine 299 and threonine 313–glycine 322. Composition is skewed to pro residues over residues serine 365–alanine 374 and proline 460–leucine 476. The 79-residue stretch at aspartate 537 to arginine 615 folds into the IPT/TIG domain. ANK repeat units lie at residues methionine 712 to glutamine 745, cysteine 757 to aspartate 787, and arginine 791 to proline 821. Disordered stretches follow at residues proline 817–methionine 874 and proline 906–proline 929. 2 stretches are compositionally biased toward low complexity: residues serine 826–serine 846 and proline 906–serine 917. IQ domains follow at residues tyrosine 1049–isoleucine 1078 and threonine 1102–isoleucine 1131.

It belongs to the CAMTA family. As to quaternary structure, may interact with calmodulin. As to expression, detected in brain. Expressed at constant levels throughout the cell cycle in neuroblastoma cell lines.

It is found in the nucleus. Its function is as follows. Transcription activator. May act as tumor suppressor. The protein is Calmodulin-binding transcription activator 2 (CAMTA2) of Homo sapiens (Human).